A 23-amino-acid chain; its full sequence is Acetylcholine receptor subunit gamma (23 aa).

This sequence belongs to the ligand-gated ion channel (TC 1.A.9) family. Acetylcholine receptor (TC 1.A.9.1) subfamily. Gamma/CHRNG sub-subfamily. As to quaternary structure, pentamer of two alpha chains, and one each of the beta, delta, and gamma chains.

Its subcellular location is the postsynaptic cell membrane. The protein localises to the cell membrane. It catalyses the reaction K(+)(in) = K(+)(out). The enzyme catalyses Na(+)(in) = Na(+)(out). Its function is as follows. After binding acetylcholine, the AChR responds by an extensive change in conformation that affects all subunits and leads to opening of an ion-conducting channel across the plasma membrane. The polypeptide is Acetylcholine receptor subunit gamma (chrng) (Electrophorus electricus (Electric eel)).